An 84-amino-acid chain; its full sequence is Large ribosomal subunit protein bL27 (84 aa).

The interval 1 to 25 is disordered; the sequence is MAHKKAGGSSRNGRDSNGQRRGVKR.

The protein belongs to the bacterial ribosomal protein bL27 family.

In Desulfatibacillum aliphaticivorans, this protein is Large ribosomal subunit protein bL27.